Here is a 204-residue protein sequence, read N- to C-terminus: 5'-deoxynucleotidase HDDC2 (204 aa).

A2 carries the post-translational modification N-acetylalanine. Residues S3 and S5 each carry the phosphoserine modification. The HD domain maps to 46-148 (VSDHMYRMAV…VKQLDQCEMI (103 aa)). Residues H49, H77, D78, E81, D86, I87, and D143 each contribute to the a divalent metal cation site. S204 bears the Phosphoserine mark.

It belongs to the HDDC2 family. Homodimer. Mn(2+) serves as cofactor. The cofactor is Co(2+). Requires Mg(2+) as cofactor.

The catalysed reaction is a 2'-deoxyribonucleoside 5'-phosphate + H2O = a 2'-deoxyribonucleoside + phosphate. Functionally, catalyzes the dephosphorylation of the nucleoside 5'-monophosphates deoxyadenosine monophosphate (dAMP), deoxycytidine monophosphate (dCMP), deoxyguanosine monophosphate (dGMP) and deoxythymidine monophosphate (dTMP). This chain is 5'-deoxynucleotidase HDDC2 (HDDC2), found in Homo sapiens (Human).